The sequence spans 168 residues: Photosystem I assembly protein Ycf3 (168 aa).

TPR repeat units follow at residues 35–68 (AFTY…EIDP), 72–105 (SYIL…NPFL), and 120–153 (GEQA…TPGN).

This sequence belongs to the Ycf3 family.

The protein localises to the plastid. It is found in the chloroplast thylakoid membrane. Its function is as follows. Essential for the assembly of the photosystem I (PSI) complex. May act as a chaperone-like factor to guide the assembly of the PSI subunits. The sequence is that of Photosystem I assembly protein Ycf3 from Nicotiana sylvestris (Wood tobacco).